The chain runs to 363 residues: Probable aminomethyltransferase (363 aa).

This sequence belongs to the GcvT family. As to quaternary structure, the glycine cleavage system is composed of four proteins: P, T, L and H.

The catalysed reaction is N(6)-[(R)-S(8)-aminomethyldihydrolipoyl]-L-lysyl-[protein] + (6S)-5,6,7,8-tetrahydrofolate = N(6)-[(R)-dihydrolipoyl]-L-lysyl-[protein] + (6R)-5,10-methylene-5,6,7,8-tetrahydrofolate + NH4(+). The glycine cleavage system catalyzes the degradation of glycine. This Haloarcula marismortui (strain ATCC 43049 / DSM 3752 / JCM 8966 / VKM B-1809) (Halobacterium marismortui) protein is Probable aminomethyltransferase.